A 391-amino-acid chain; its full sequence is Sister chromatid cohesion protein DCC1 (391 aa).

It belongs to the DCC1 family. Component of the ctf18-RFC complex which consists of ctf18, ctf8, dscc1 and the RFC complex.

It localises to the nucleus. Functionally, loads pcna onto primed templates regulating velocity, spacing and restart activity of replication forks. May couple DNA replication to sister chromatid cohesion. This chain is Sister chromatid cohesion protein DCC1 (dscc1), found in Danio rerio (Zebrafish).